The primary structure comprises 405 residues: Pleckstrin homology-like domain family A member 1 (405 aa).

Composition is skewed to basic and acidic residues over residues 1-11 and 54-63; these read MRRTPAAERLS and RSPEDGREQP. 3 disordered regions span residues 1–67, 189–217, and 293–405; these read MRRT…AHGS, QLQQQQQQQQPGQGTAEPSQPSGPTVASL, and QQHL…SNSA. Positions 153-277 constitute a PH domain; the sequence is ALKEGVLEKR…AEITLQMVQY (125 aa). Low complexity predominate over residues 189-202; it reads QLQQQQQQQQPGQG. Over residues 204–213 the composition is skewed to polar residues; that stretch reads AEPSQPSGPT. Residues 294–309 show a composition bias toward low complexity; that stretch reads QHLVQQQPPQTQQIQP. A 16 X 2 AA repeats of P-Q region spans residues 309–344; sequence PQPQPQIQPQPQPQIQPQPQPQPQPQPQPQPQPQPQ. Residues 310–342 show a composition bias toward pro residues; sequence QPQPQIQPQPQPQIQPQPQPQPQPQPQPQPQPQ. Over residues 350–376 the composition is skewed to basic residues; the sequence is PHPHPHPYSHPHQHPHPHPHPHPHPHP. Residues 354–377 form an 11 X 2 AA repeats of P-H region; sequence PHPYSHPHQHPHPHPHPHPHPHPH. A compositionally biased stretch (low complexity) spans 378–389; it reads PYQLQHAHQPLH.

Interacts with RPL14, EIF3S7 and PABPC4. In terms of tissue distribution, widely expressed with very high levels in adult liver and high levels in adult lung. According to PubMed:10428057 expressed at low levels in liver. Expressed at increased levels in atherosclerotic lesions observed in hyperhomocysteinema.

It localises to the cytoplasm. The protein resides in the cytoplasmic vesicle. It is found in the nucleus. Its subcellular location is the nucleolus. Seems to be involved in regulation of apoptosis. May be involved in detachment-mediated programmed cell death. May mediate apoptosis during neuronal development. May be involved in regulation of anti-apoptotic effects of IGF1. Required for TCR-induced apoptosis and expression of TNFRSF6/FAS in a T-cell hybridoma cell line. May be involved in translational regulation. In Mus musculus (Mouse), this protein is Pleckstrin homology-like domain family A member 1 (Phlda1).